Consider the following 112-residue polypeptide: Large ribosomal subunit protein bL20c (112 aa).

Belongs to the bacterial ribosomal protein bL20 family.

Its subcellular location is the plastid. It is found in the chloroplast. Binds directly to 23S ribosomal RNA and is necessary for the in vitro assembly process of the 50S ribosomal subunit. It is not involved in the protein synthesizing functions of that subunit. This Anthoceros angustus (Hornwort) protein is Large ribosomal subunit protein bL20c (rpl20).